The primary structure comprises 883 residues: Integrator complex subunit 6-B (883 aa).

The VWFA domain occupies 3 to 227 (ILLFLLDTSA…QCLESLVQKI (225 aa)). Positions 626–633 (MMIDEADE) match the Inhibitory loop motif.

The protein belongs to the Integrator subunit 6 family. Component of the Integrator complex, composed of core subunits INTS1, INTS2, INTS3, INTS4, INTS5, INTS6, INTS7, INTS8, INTS9/RC74, INTS10, INTS11/CPSF3L, INTS12, INTS13, INTS14 and INTS15. The core complex associates with protein phosphatase 2A subunits PPP2CA and PPP2R1A, to form the Integrator-PP2A (INTAC) complex.

The protein resides in the nucleus. Its subcellular location is the chromosome. In terms of biological role, component of the integrator complex, a multiprotein complex that terminates RNA polymerase II (Pol II) transcription in the promoter-proximal region of genes. The integrator complex provides a quality checkpoint during transcription elongation by driving premature transcription termination of transcripts that are unfavorably configured for transcriptional elongation: the complex terminates transcription by (1) catalyzing dephosphorylation of the C-terminal domain (CTD) of Pol II subunit POLR2A/RPB1 and SUPT5H/SPT5, (2) degrading the exiting nascent RNA transcript via endonuclease activity and (3) promoting the release of Pol II from bound DNA. The integrator complex is also involved in terminating the synthesis of non-coding Pol II transcripts, such as enhancer RNAs (eRNAs), small nuclear RNAs (snRNAs), telomerase RNAs and long non-coding RNAs (lncRNAs). Within the integrator complex, INTS6 acts as a molecular adapter that promotes assembly of protein phosphatase 2A (PP2A) subunits to the integrator core complex, promoting recruitment of PP2A to transcription pause-release checkpoint. The protein is Integrator complex subunit 6-B (ints6-b) of Xenopus laevis (African clawed frog).